The sequence spans 286 residues: CBY1-interacting BAR domain-containing protein 1 (286 aa).

The N-terminal 47 residues, methionine 1–lysine 47, are a transit peptide targeting the mitochondrion. The tract at residues aspartate 10–valine 220 is BAR-like. Residues lysine 107–lysine 178 adopt a coiled-coil conformation. The disordered stretch occupies residues glycine 258–asparagine 286. Over residues valine 271–asparagine 286 the composition is skewed to acidic residues.

Belongs to the CIBAR family. As to quaternary structure, homodimer (via BAR-like domain). Heterodimer with FAM92B (via BAR-like domains). Interacts (via BAR-like domain) with CBY1; this interaction is required for targeting FAM92A to centriole and cilium basal body. Interacts (via BAR-like domain) with CBY3; both proteins form a ninefold symmetric structure at the flagellar base; are recruited to the annulus in a mutually dependent manner and regulate annulus positionning. In terms of tissue distribution, expressed in the heart, liver, spleen, lung, kidney, brain and muscle (at protein level). Strongly expressed throughout the developing limb bud, including the progress zone and the apical ectodermal ridge.

The protein localises to the cytoplasm. It is found in the cytoskeleton. Its subcellular location is the microtubule organizing center. It localises to the centrosome. The protein resides in the centriole. The protein localises to the cilium basal body. It is found in the cell projection. Its subcellular location is the cilium. It localises to the nucleus. The protein resides in the mitochondrion inner membrane. The protein localises to the flagellum. Functionally, plays a critical role in regulating mitochondrial ultrastructure and function by maintaining the integrity of mitochondrial morphology, particularly the organization of cristae. Preferentially binds to negatively charged phospholipids like cardiolipin and phosphatidylinositol 4,5-bisphosphate enhancing its interaction with mitochondrial membranes. Induces membrane curvature and tubulation, which are critical for maintaining mitochondrial ultrastructure and the organization of cristae. Plays a crucial role in ciliogenesis. May play a role in limb development through its role in ciliogenesis. Plays a key role in the correct positioning of the annulus, a septin-based ring structure in the sperm flagellum, serving both as a physical barrier and a membrane diffusion barrier that separates the midpiece (MP) from the principal piece (PP). This positioning is essential for proper sperm motility and function. Interacts with CBY3 to form a complex which localizes to the curved membrane region of the flagellar pocket. By doing so, may provide stability and rigidity to the periannular membrane to prevent membrane deformation. This function is crucial for halting annulus migration at the proximal end of the fibrous sheath-containing PP. This Mus musculus (Mouse) protein is CBY1-interacting BAR domain-containing protein 1.